Here is a 334-residue protein sequence, read N- to C-terminus: Beta-1,3-N-acetylglucosaminyltransferase radical fringe (334 aa).

The Cytoplasmic portion of the chain corresponds to 1–6; sequence MSRVRR. Residues 7–29 form a helical; Signal-anchor for type II membrane protein membrane-spanning segment; it reads VLCRACLALAAVLAVLLLLPLPL. Residues 30-334 are Lumenal-facing; the sequence is PLPLPLPRAP…MKNRGKEAFQ (305 aa). R77 lines the substrate pocket. N116 carries an N-linked (GlcNAc...) asparagine glycan. Intrachain disulfides connect C117–C128 and C146–C210. D150 is a substrate binding site. D151 serves as a coordination point for Mn(2+). Residue D240 is part of the active site. A Mn(2+)-binding site is contributed by H264. A disulfide bond links C314 and C323.

It belongs to the glycosyltransferase 31 family. Mn(2+) is required as a cofactor. Most abundantly expressed in adult brain. Expressed in most neurons of the brain but not in glial cells. Also detected to a lower extent in adult lung and kidney.

It is found in the golgi apparatus membrane. It carries out the reaction 3-O-(alpha-L-fucosyl)-L-threonyl-[EGF-like domain protein] + UDP-N-acetyl-alpha-D-glucosamine = 3-O-(N-acetyl-beta-D-glucosaminyl-(1-&gt;3)-alpha-L-fucosyl)-L-threonyl-[EGF-like domain protein] + UDP + H(+). The enzyme catalyses 3-O-(alpha-L-fucosyl)-L-seryl-[EGF-like domain protein] + UDP-N-acetyl-alpha-D-glucosamine = 3-O-(N-acetyl-beta-D-glucosaminyl-(1-&gt;3)-alpha-L-fucosyl)-L-seryl-[EGF-like domain protein] + UDP + H(+). In terms of biological role, glycosyltransferase that initiates the elongation of O-linked fucose residues attached to EGF-like repeats in the extracellular domain of Notch molecules. Modulates NOTCH1 activity by modifying O-fucose residues at specific EGF-like domains resulting in enhancement of NOTCH1 activation by DLL1 and JAG1. Inhibits Notch signaling in postmitotic neurons of the brain. It may play a role in adult brain and in neurogenesis. It may play a role in limb development. This Rattus norvegicus (Rat) protein is Beta-1,3-N-acetylglucosaminyltransferase radical fringe.